The sequence spans 935 residues: Progesterone receptor (935 aa).

Residues 1-164 form an AF3; mediates transcriptional activation region; that stretch reads MTELKAKGPR…PATQRVLSPL (164 aa). The disordered stretch occupies residues 1 to 256; it reads MTELKAKGPR…AAAGGGAAAV (256 aa). Positions 1 to 568 are modulating, Pro-Rich; sequence MTELKAKGPR…YSFESLPQKI (568 aa). Position 20 is a phosphoserine (S20). The LXXL motif 1 motif lies at 55–59; that stretch reads LDGLL. Phosphoserine is present on S81. An LXXL motif 2 motif is present at residues 115 to 119; sequence LDTLL. Phosphoserine is present on residues S130 and S162. Residues 165–305 are mediates transcriptional transrepression; the sequence is MSRSGGKAGD…LATTTMDFTH (141 aa). Positions 183-187 match the Nuclear localization signal motif; that stretch reads KVLPR. A phosphoserine mark is found at S190 and S213. A compositionally biased stretch (acidic residues) spans 220 to 231; the sequence is EVEEEDGSESED. The segment covering 232–246 has biased composition (low complexity); sequence SAGPLLKGKPRALGG. The residue at position 294 (S294) is a Phosphoserine; by MAPK1. Residues 328–353 are disordered; the sequence is SYDGGAGAASAFAPPRSSPSASSTPV. The segment covering 335–350 has biased composition (low complexity); that stretch reads AASAFAPPRSSPSASS. Position 345 is a phosphoserine; by MAPK (S345). A Glycyl lysine isopeptide (Lys-Gly) (interchain with G-Cter in SUMO); alternate cross-link involves residue K388. K388 participates in a covalent cross-link: Glycyl lysine isopeptide (Lys-Gly) (interchain with G-Cter in ubiquitin); alternate. S400 is subject to Phosphoserine; by CDK2. Residues 415 to 452 are disordered; sequence PDFPLGPPPPLPPRAPPSRPGEAAVTAAPAGASVSSAS. The span at 418-433 shows a compositional bias: pro residues; that stretch reads PLGPPPPLPPRAPPSR. The segment covering 434 to 452 has biased composition (low complexity); that stretch reads PGEAAVTAAPAGASVSSAS. The segment at 456-548 is AF1; mediates transcriptional activation; sequence STLECILYKA…VYPPYLNYLR (93 aa). A Glycyl lysine isopeptide (Lys-Gly) (interchain with G-Cter in SUMO) cross-link involves residue K533. 2 NR C4-type zinc fingers span residues 569 to 589 and 605 to 629; these read CLICGDEASGCHYGVLTCGSC and CAGRNDCIVDKIRRKNCPACRLRKC. The nuclear receptor DNA-binding region spans 569-641; that stretch reads CLICGDEASG…AGMVLGGRKF (73 aa). At S678 the chain carries Phosphoserine. The NR LBD domain maps to 681–915; that stretch reads QDIQLIPPLI…EFPEMMSEVI (235 aa). An AF2; mediates transcriptional activation region spans residues 689 to 935; that stretch reads LINLLVSIEP…MVKPLLFHKK (247 aa). Residue R768 coordinates progesterone.

The protein belongs to the nuclear hormone receptor family. Interacts with SMARD1 and UNC45A. Interacts with CUEDC2; the interaction promotes ubiquitination, decreases sumoylation, and represses transcriptional activity. Interacts with PIAS3; the interaction promotes sumoylation of PR in a hormone-dependent manner, inhibits DNA-binding, and alters nuclear export. Interacts with SP1; the interaction requires ligand-induced phosphorylation on Ser-345 by ERK1/2-MAPK. Interacts with PRMT2. Interacts with NCOA2 and NCOA1. Interacts with KLF9. Interacts with GTF2B. Post-translationally, phosphorylated on multiple serine sites. Several of these sites are hormone-dependent. Phosphorylation on Ser-294 is highly hormone-dependent and modulates ubiquitination and sumoylation on Lys-388. Phosphorylation on Ser-345 also requires induction by hormone. Basal phosphorylation on Ser-81, Ser-162, Ser-190 and Ser-400 is increased in response to progesterone and can be phosphorylated in vitro by the CDK2-A1 complex. Increased levels of phosphorylation on Ser-400 also in the presence of EGF, heregulin, IGF, PMA and FBS. Phosphorylation at this site by CDK2 is ligand-independent, and increases nuclear translocation and transcriptional activity. Phosphorylation at Ser-162 and Ser-294, but not at Ser-190, is impaired during the G(2)/M phase of the cell cycle. Phosphorylation on Ser-345 by ERK1/2 MAPK is required for interaction with SP1. In terms of processing, sumoylation is hormone-dependent and represses transcriptional activity. Sumoylation on all three sites is enhanced by PIAS3. Desumoylated by SENP1. Sumoylation on Lys-388, the main site of sumoylation, is repressed by ubiquitination on the same site, and modulated by phosphorylation at Ser-294. Ubiquitination is hormone-dependent and represses sumoylation on the same site. Promoted by MAPK-mediated phosphorylation on Ser-294. Ubiquitinated by UBR5, leading to its degradation: UBR5 specifically recognizes and binds ligand-bound PGR when it is not associated with coactivators (NCOAs). In presence of NCOAs, the UBR5-degron is not accessible, preventing its ubiquitination and degradation. Post-translationally, palmitoylated by ZDHHC7 and ZDHHC21. Palmitoylation is required for plasma membrane targeting and for rapid intracellular signaling via ERK and AKT kinases and cAMP generation.

Its subcellular location is the nucleus. It is found in the cytoplasm. In terms of biological role, the steroid hormones and their receptors are involved in the regulation of eukaryotic gene expression and affect cellular proliferation and differentiation in target tissues. Transcriptional activator of several progesteron-dependent promoters in a variety of cell types. Involved in activation of SRC-dependent MAPK signaling on hormone stimulation. This Macaca sylvanus (Barbary macaque) protein is Progesterone receptor (PGR).